A 128-amino-acid polypeptide reads, in one-letter code: Glycine cleavage system H protein (128 aa).

One can recognise a Lipoyl-binding domain in the interval 25–107 (TITVGITHHA…YGAGWFFKIK (83 aa)). Lys66 bears the N6-lipoyllysine mark.

This sequence belongs to the GcvH family. In terms of assembly, the glycine cleavage system is composed of four proteins: P, T, L and H. (R)-lipoate serves as cofactor.

Functionally, the glycine cleavage system catalyzes the degradation of glycine. The H protein shuttles the methylamine group of glycine from the P protein to the T protein. In Neisseria meningitidis serogroup C (strain 053442), this protein is Glycine cleavage system H protein.